A 561-amino-acid chain; its full sequence is 3beta-hydroxysteroid-dehydrogenase/decarboxylase isoform 3 (561 aa).

Position 166 (K166) interacts with NAD(+). In terms of domain architecture, Reticulon spans 379 to 561 (VADILLWRNE…SDASSKPMFM (183 aa)). Transmembrane regions (helical) follow at residues 392-412 (FVSF…GNTF), 420-440 (LFIF…IFGF), and 504-524 (SLAA…FIYE).

The protein belongs to the 3-beta-HSD family.

Its subcellular location is the endoplasmic reticulum membrane. The catalysed reaction is a 3beta-hydroxysteroid-4alpha-carboxylate + NADP(+) = a 3-oxosteroid + CO2 + NADPH. It carries out the reaction a 3beta-hydroxysteroid-4alpha-carboxylate + NAD(+) = a 3-oxosteroid + CO2 + NADH. It functions in the pathway steroid biosynthesis; zymosterol biosynthesis; zymosterol from lanosterol: step 4/6. This Arabidopsis thaliana (Mouse-ear cress) protein is 3beta-hydroxysteroid-dehydrogenase/decarboxylase isoform 3 (3BETAHSD/D3).